We begin with the raw amino-acid sequence, 138 residues long: Basic phospholipase A2 myotoxin I (138 aa).

Residues 1 to 16 (MRTLWIMAVLLVGVEG) form the signal peptide. 7 disulfides stabilise this stretch: cysteine 42-cysteine 131, cysteine 44-cysteine 60, cysteine 59-cysteine 111, cysteine 65-cysteine 138, cysteine 66-cysteine 104, cysteine 73-cysteine 97, and cysteine 91-cysteine 102. The Ca(2+) site is built by tyrosine 43, glycine 45, and glycine 47. Histidine 63 is a catalytic residue. A Ca(2+)-binding site is contributed by aspartate 64. The active site involves aspartate 105.

It belongs to the phospholipase A2 family. Group II subfamily. D49 sub-subfamily. In terms of assembly, monomer. Homodimer; non-covalently linked (alternative/compact dimer conformation). It depends on Ca(2+) as a cofactor. Expressed by the venom gland.

The protein localises to the secreted. It carries out the reaction a 1,2-diacyl-sn-glycero-3-phosphocholine + H2O = a 1-acyl-sn-glycero-3-phosphocholine + a fatty acid + H(+). With respect to regulation, high level of membrane cholesterol content reduces cytolytic activity, whereas low level of membrane cholesterol content increases cytolytic activity. Its function is as follows. Snake venom phospholipase A2 (PLA2) that displays local myotoxic activity. It also displays anticoagulant action in plasma and edema-inducing activities. In addition, it shows cytotoxic activity to a variety of cell types and bactericidal activity to a variety of Gram-negative and Gram-positive bacteria. PLA2 catalyzes the calcium-dependent hydrolysis of the 2-acyl groups in 3-sn-phosphoglycerides. The protein is Basic phospholipase A2 myotoxin I of Bothrops asper (Terciopelo).